The chain runs to 459 residues: Bifunctional protein GlmU (459 aa).

The tract at residues 1 to 229 (MSNYAIILAA…FDESLGVNDR (229 aa)) is pyrophosphorylase. UDP-N-acetyl-alpha-D-glucosamine is bound by residues 8–11 (LAAG), K22, Q72, and 77–78 (GT). A Mg(2+)-binding site is contributed by D102. 4 residues coordinate UDP-N-acetyl-alpha-D-glucosamine: G139, E154, N169, and N227. Position 227 (N227) interacts with Mg(2+). The segment at 230 to 250 (VALATAEKVMRHRIARQHMVN) is linker. The interval 251-459 (GVTVVNPDSA…NKKPHHPSQK (209 aa)) is N-acetyltransferase. The UDP-N-acetyl-alpha-D-glucosamine site is built by R332 and K350. H362 functions as the Proton acceptor in the catalytic mechanism. Residues Y365 and N376 each contribute to the UDP-N-acetyl-alpha-D-glucosamine site. Residues A379, 385-386 (NY), S404, A422, and R439 each bind acetyl-CoA.

It in the N-terminal section; belongs to the N-acetylglucosamine-1-phosphate uridyltransferase family. In the C-terminal section; belongs to the transferase hexapeptide repeat family. In terms of assembly, homotrimer. Mg(2+) is required as a cofactor.

The protein resides in the cytoplasm. It catalyses the reaction alpha-D-glucosamine 1-phosphate + acetyl-CoA = N-acetyl-alpha-D-glucosamine 1-phosphate + CoA + H(+). It carries out the reaction N-acetyl-alpha-D-glucosamine 1-phosphate + UTP + H(+) = UDP-N-acetyl-alpha-D-glucosamine + diphosphate. It functions in the pathway nucleotide-sugar biosynthesis; UDP-N-acetyl-alpha-D-glucosamine biosynthesis; N-acetyl-alpha-D-glucosamine 1-phosphate from alpha-D-glucosamine 6-phosphate (route II): step 2/2. The protein operates within nucleotide-sugar biosynthesis; UDP-N-acetyl-alpha-D-glucosamine biosynthesis; UDP-N-acetyl-alpha-D-glucosamine from N-acetyl-alpha-D-glucosamine 1-phosphate: step 1/1. Its pathway is bacterial outer membrane biogenesis; LPS lipid A biosynthesis. Catalyzes the last two sequential reactions in the de novo biosynthetic pathway for UDP-N-acetylglucosamine (UDP-GlcNAc). The C-terminal domain catalyzes the transfer of acetyl group from acetyl coenzyme A to glucosamine-1-phosphate (GlcN-1-P) to produce N-acetylglucosamine-1-phosphate (GlcNAc-1-P), which is converted into UDP-GlcNAc by the transfer of uridine 5-monophosphate (from uridine 5-triphosphate), a reaction catalyzed by the N-terminal domain. The protein is Bifunctional protein GlmU of Streptococcus agalactiae serotype III (strain NEM316).